The following is a 368-amino-acid chain: Homoserine dehydrogenase (368 aa).

NAD(+)-binding residues include Val12, Gly14, and Val15. Position 15 (Val15) interacts with NADP(+). Residues Val15, Lys59, Thr95, Ser96, and Lys119 each contribute to the NADPH site. Thr95 is a binding site for NAD(+). Position 95 (Thr95) interacts with NADP(+). Lys119 contributes to the NADP(+) binding site. Residues Glu146, Val149, Ala151, and Leu153 each contribute to the Na(+) site. Gly209 and Glu212 together coordinate NADP(+). 2 residues coordinate L-homoserine: Glu212 and Asp223. The active-site Proton donor is the Lys227. Gly349 is a binding site for NAD(+). An NADP(+)-binding site is contributed by Gly349. Gly349 provides a ligand contact to NADPH.

It belongs to the homoserine dehydrogenase family. It depends on a metal cation as a cofactor.

It catalyses the reaction L-homoserine + NADP(+) = L-aspartate 4-semialdehyde + NADPH + H(+). It carries out the reaction L-homoserine + NAD(+) = L-aspartate 4-semialdehyde + NADH + H(+). Its pathway is amino-acid biosynthesis; L-methionine biosynthesis via de novo pathway; L-homoserine from L-aspartate: step 3/3. It participates in amino-acid biosynthesis; L-threonine biosynthesis; L-threonine from L-aspartate: step 3/5. Catalyzes the conversion of L-aspartate-beta-semialdehyde (L-Asa) to L-homoserine (L-Hse), the third step in the biosynthesis of amino acids that derive from aspartate (the aspartate family of amino acids), including methioinine and threonine, the latter of which is a precursor to isoleucine; production of homoserine leads to a branch-point in the pathway as it can either be O-phosphorylated for processing to threonine, or O-acylated for processing to methionine. The protein is Homoserine dehydrogenase of Emericella nidulans (strain FGSC A4 / ATCC 38163 / CBS 112.46 / NRRL 194 / M139) (Aspergillus nidulans).